Consider the following 431-residue polypeptide: Divalent metal cation transporter MntH (431 aa).

11 consecutive transmembrane segments (helical) span residues Leu-33–Phe-53, Ser-61–Leu-81, Trp-110–Gly-130, Ile-141–Glu-161, Thr-170–Ala-190, Ala-211–His-231, Ile-258–Ala-278, Gly-307–Ala-327, Ile-347–Leu-367, Val-368–Ile-388, and Ile-406–Thr-426.

The protein belongs to the NRAMP family.

It is found in the cell membrane. Functionally, h(+)-stimulated, divalent metal cation uptake system. The protein is Divalent metal cation transporter MntH of Clostridium acetobutylicum (strain ATCC 824 / DSM 792 / JCM 1419 / IAM 19013 / LMG 5710 / NBRC 13948 / NRRL B-527 / VKM B-1787 / 2291 / W).